Reading from the N-terminus, the 211-residue chain is Large ribosomal subunit protein eL13 (211 aa).

At Lys-16 the chain carries N6-acetyllysine. Ser-52, Ser-77, and Ser-106 each carry phosphoserine. Residues Lys-123 and Lys-145 each participate in a glycyl lysine isopeptide (Lys-Gly) (interchain with G-Cter in SUMO2) cross-link. Residue Lys-174 forms a Glycyl lysine isopeptide (Lys-Gly) (interchain with G-Cter in SUMO1); alternate linkage. Glycyl lysine isopeptide (Lys-Gly) (interchain with G-Cter in SUMO2); alternate cross-links involve residues Lys-174 and Lys-177. At Lys-177 the chain carries N6-acetyllysine; alternate.

This sequence belongs to the eukaryotic ribosomal protein eL13 family. In terms of assembly, component of the 60S large ribosomal subunit (LSU). Higher levels of expression in benign breast lesions than in carcinomas.

The protein resides in the cytoplasm. In terms of biological role, component of the ribosome, a large ribonucleoprotein complex responsible for the synthesis of proteins in the cell. The small ribosomal subunit (SSU) binds messenger RNAs (mRNAs) and translates the encoded message by selecting cognate aminoacyl-transfer RNA (tRNA) molecules. The large subunit (LSU) contains the ribosomal catalytic site termed the peptidyl transferase center (PTC), which catalyzes the formation of peptide bonds, thereby polymerizing the amino acids delivered by tRNAs into a polypeptide chain. The nascent polypeptides leave the ribosome through a tunnel in the LSU and interact with protein factors that function in enzymatic processing, targeting, and the membrane insertion of nascent chains at the exit of the ribosomal tunnel. As part of the LSU, it is probably required for its formation and the maturation of rRNAs. Plays a role in bone development. The sequence is that of Large ribosomal subunit protein eL13 (RPL13) from Homo sapiens (Human).